Here is a 370-residue protein sequence, read N- to C-terminus: Platelet-derived growth factor D (370 aa).

The first 18 residues, Met-1 to Cys-18, serve as a signal peptide directing secretion. Residues Arg-52 to Leu-170 form the CUB domain. Cys-109 and Cys-131 are oxidised to a cystine. Asn-276 is a glycosylation site (N-linked (GlcNAc...) asparagine). 2 cysteine pairs are disulfide-bonded: Cys-302–Cys-360 and Cys-306–Cys-362.

This sequence belongs to the PDGF/VEGF growth factor family. Homodimer; disulfide-linked. Interacts with PDGFRB homodimers, and with heterodimers formed by PDGFRA and PDGFRB. In terms of processing, activated by proteolytic cleavage. Proteolytic removal of the N-terminal CUB domain releasing the core domain is necessary for unmasking the receptor-binding epitopes of the core domain. Cleavage after Arg-247 or Arg-249 by urokinase plasminogen activator gives rise to the active form. Expressed at high levels in the heart, pancreas, adrenal gland and ovary and at low levels in placenta, liver, kidney, prostate, testis, small intestine, spleen and colon. In the kidney, expressed by the visceral epithelial cells of the glomeruli. A widespread expression is also seen in the medial smooth muscle cells of arteries and arterioles, as well as in smooth muscle cells of vasa rectae in the medullary area. Expressed in the adventitial connective tissue surrounding the suprarenal artery. In chronic obstructive nephropathy, a persistent expression is seen in glomerular visceral epithelial cells and vascular smooth muscle cells, as well as de novo expression by periglomerular interstitial cells and by some neointimal cells of atherosclerotic vessels. Expression in normal prostate is seen preferentially in the mesenchyme of the gland while expression is increased and more profuse in prostate carcinoma. Expressed in many ovarian, lung, renal and brain cancer-derived cell lines.

Its subcellular location is the secreted. Growth factor that plays an essential role in the regulation of embryonic development, cell proliferation, cell migration, survival and chemotaxis. Potent mitogen for cells of mesenchymal origin. Plays an important role in wound healing. Induces macrophage recruitment, increased interstitial pressure, and blood vessel maturation during angiogenesis. Can initiate events that lead to a mesangial proliferative glomerulonephritis, including influx of monocytes and macrophages and production of extracellular matrix. The sequence is that of Platelet-derived growth factor D (PDGFD) from Homo sapiens (Human).